Here is a 610-residue protein sequence, read N- to C-terminus: MSEIFDAKAFLKTVTSQPGVYRMYDAGGTVIYVGKAKDLKKRLSSYFRSNLASRKTEALVAQIQHIDVTVTHTETEALLLEHNYIKLYQPRYNVLLRDDKSYPFIFLSGDTHPRLAMHRGAKHAKGEYFGPFPNGYAVRETLALLQKIFPIRQCENSVYRNRSRPCLQYQIGRCLGPCVAGLVSEEEYAQQVEYVRLFLSGKDDQVLTQLIARMEKASQDLAFEEAARIRDQIQAVRRVTERQFVSNAGDDLDVIGVAFDAGMACVHVLFIRQGKVLGSRSYFPKVPGGTELGEVVETFVGQFYLQGSQMRTLPGEILLDFNLSDKTLLADSLSELAGRRIHVQTKPRGDRARYLKLARTNAATALITKLSQQSTITQRLTALAAVLKLPAIKRMECFDISHTMGEQTVASCVVFDANGPLRAEYRRYNIAGITPGDDYAAMNQVLRRRYGKAIEESKIPDVILIDGGKGQLAQAKAVFAELDVPWDKHRPLLLGVAKGADRKAGLETLFFEPEGEGFSLPPDSPALHVIQHIRDESHDHAIGGHRKKRAKVKNTSTLETIEGVGPKRRQMLLKYMGGLQGLRNASVEEIAKVPGISQGLAEKIFWSLKH.

A GIY-YIG domain is found at 16 to 94 (SQPGVYRMYD…IKLYQPRYNV (79 aa)). In terms of domain architecture, UVR spans 204-239 (DQVLTQLIARMEKASQDLAFEEAARIRDQIQAVRRV).

This sequence belongs to the UvrC family. In terms of assembly, interacts with UvrB in an incision complex.

The protein resides in the cytoplasm. The UvrABC repair system catalyzes the recognition and processing of DNA lesions. UvrC both incises the 5' and 3' sides of the lesion. The N-terminal half is responsible for the 3' incision and the C-terminal half is responsible for the 5' incision. This Salmonella paratyphi C (strain RKS4594) protein is UvrABC system protein C.